Consider the following 449-residue polypeptide: Tubulin alpha chain (449 aa).

Gln-11 contributes to the GTP binding site. An N6-acetyllysine modification is found at Lys-40. Residues Glu-71, Ser-140, Gly-144, Thr-145, Thr-179, Asn-206, and Asn-228 each contribute to the GTP site. Glu-71 contributes to the Mg(2+) binding site. Residue Glu-254 is part of the active site.

It belongs to the tubulin family. As to quaternary structure, dimer of alpha and beta chains. A typical microtubule is a hollow water-filled tube with an outer diameter of 25 nm and an inner diameter of 15 nM. Alpha-beta heterodimers associate head-to-tail to form protofilaments running lengthwise along the microtubule wall with the beta-tubulin subunit facing the microtubule plus end conferring a structural polarity. Microtubules usually have 13 protofilaments but different protofilament numbers can be found in some organisms and specialized cells. It depends on Mg(2+) as a cofactor. In terms of processing, undergoes a tyrosination/detyrosination cycle, the cyclic removal and re-addition of a C-terminal tyrosine residue by the enzymes tubulin tyrosine carboxypeptidase (TTCP) and tubulin tyrosine ligase (TTL), respectively. Some glutamate residues at the C-terminus are either polyglutamylated or polyglycylated. These 2 modifications occur exclusively on glutamate residues and result in either polyglutamate or polyglycine chains on the gamma-carboxyl group. Both modifications can coexist on the same protein on adjacent residues, and lowering polyglycylation levels increases polyglutamylation, and reciprocally. The precise function of such modifications is still unclear but they regulate the assembly and dynamics of axonemal microtubules. Post-translationally, acetylation of alpha chains at Lys-40 stabilizes microtubules and affects affinity and processivity of microtubule motors. This modification has a role in multiple cellular functions, ranging from cell motility, cell cycle progression or cell differentiation to intracellular trafficking and signaling.

The protein resides in the cytoplasm. Its subcellular location is the cytoskeleton. It catalyses the reaction GTP + H2O = GDP + phosphate + H(+). Tubulin is the major constituent of microtubules, a cylinder consisting of laterally associated linear protofilaments composed of alpha- and beta-tubulin heterodimers. Microtubules grow by the addition of GTP-tubulin dimers to the microtubule end, where a stabilizing cap forms. Below the cap, tubulin dimers are in GDP-bound state, owing to GTPase activity of alpha-tubulin. In Tetrahymena thermophila, this protein is Tubulin alpha chain.